The primary structure comprises 548 residues: Membrane protein insertase YidC (548 aa).

The helical transmembrane segment at asparagine 6–aspartate 26 threads the bilayer. The segment at asparagine 28–alanine 54 is disordered. The segment covering proline 29–threonine 42 has biased composition (low complexity). 4 consecutive transmembrane segments (helical) span residues phenylalanine 350 to tyrosine 370, phenylalanine 424 to isoleucine 444, leucine 458 to isoleucine 478, and proline 499 to valine 519.

This sequence belongs to the OXA1/ALB3/YidC family. Type 1 subfamily. Interacts with the Sec translocase complex via SecD. Specifically interacts with transmembrane segments of nascent integral membrane proteins during membrane integration.

It localises to the cell inner membrane. Functionally, required for the insertion and/or proper folding and/or complex formation of integral membrane proteins into the membrane. Involved in integration of membrane proteins that insert both dependently and independently of the Sec translocase complex, as well as at least some lipoproteins. Aids folding of multispanning membrane proteins. The protein is Membrane protein insertase YidC of Salmonella arizonae (strain ATCC BAA-731 / CDC346-86 / RSK2980).